The primary structure comprises 342 residues: Trace amine-associated receptor 8 (342 aa).

Residues 1-31 (MTSNFSQPVVQLCYEDVNGSCIETPYSPGSR) are Extracellular-facing. Residues Asn-4 and Asn-18 are each glycosylated (N-linked (GlcNAc...) asparagine). 2 disulfide bridges follow: Cys-21–Cys-185 and Cys-104–Cys-189. Residues 32–52 (VILYTAFSFGSLLAVFGNLLV) traverse the membrane as a helical segment. Topologically, residues 53 to 67 (MTSVLHFKQLHSPTN) are cytoplasmic. Residues 68–88 (FLIASLACADFLVGVTVMLFS) traverse the membrane as a helical segment. Residues 89-111 (MVRTVESCWYFGAKFCTLHSCCD) are Extracellular-facing. Residues 112-132 (VAFCYSSVLHLCFICIDRYIV) traverse the membrane as a helical segment. The Cytoplasmic segment spans residues 133–146 (VTDPLVYATKFTVS). The chain crosses the membrane as a helical span at residues 147 to 167 (VSGICISVSWILPLTYSGAVF). At 168 to 195 (YTGVNDDGLEELVSALNCVGGCQIIVSQ) the chain is on the extracellular side. A helical transmembrane segment spans residues 196–216 (GWVLIDFLLFFIPTLVMIILY). The Cytoplasmic portion of the chain corresponds to 217 to 258 (SKIFLIAKQQAIKIETTSSKVESSSESYKIRVAKRERKAAKT). The chain crosses the membrane as a helical span at residues 259–279 (LGVTVLAFVISWLPYTVDILI). A topological domain (extracellular) is located at residue Asp-280. A helical transmembrane segment spans residues 281–301 (AFMGFLTPAYIYEICCWSAYY). Over 302–342 (NSAMNPLIYALFYPWFRKAIKLILSGDVLKASSSTISLFLE) the chain is Cytoplasmic.

The protein belongs to the G-protein coupled receptor 1 family. In terms of tissue distribution, expressed in kidney and amygdala. Not expressed in other tissues or brain regions tested.

It localises to the cell membrane. Functionally, olfactory receptor specific for trace amines. Trace amine compounds are enriched in animal body fluids and act on trace amine-associated receptors (TAARs) to elicit both intraspecific and interspecific innate behaviors. Ligand-binding causes a conformation change that triggers signaling via G alpha proteins, possibly G(i)/G(o) G alpha proteins. This is Trace amine-associated receptor 8 (TAAR8) from Homo sapiens (Human).